Consider the following 505-residue polypeptide: Probable cytosol aminopeptidase (505 aa).

Mn(2+) is bound by residues lysine 269 and aspartate 274. Lysine 281 is a catalytic residue. Positions 292, 351, and 353 each coordinate Mn(2+). Arginine 355 is an active-site residue.

It belongs to the peptidase M17 family. It depends on Mn(2+) as a cofactor.

It localises to the cytoplasm. It catalyses the reaction Release of an N-terminal amino acid, Xaa-|-Yaa-, in which Xaa is preferably Leu, but may be other amino acids including Pro although not Arg or Lys, and Yaa may be Pro. Amino acid amides and methyl esters are also readily hydrolyzed, but rates on arylamides are exceedingly low.. The catalysed reaction is Release of an N-terminal amino acid, preferentially leucine, but not glutamic or aspartic acids.. In terms of biological role, presumably involved in the processing and regular turnover of intracellular proteins. Catalyzes the removal of unsubstituted N-terminal amino acids from various peptides. This Rhodococcus erythropolis (strain PR4 / NBRC 100887) protein is Probable cytosol aminopeptidase.